The sequence spans 302 residues: RNA polymerase sigma factor RpoH (302 aa).

The sigma-70 factor domain-2 stretch occupies residues 57-126 (LVTSHLRLVA…IQEYILRSWS (70 aa)). The short motif at 81–84 (ELIS) is the Interaction with polymerase core subunit RpoC element. Residues 235–286 (AMDKLNDREKHILTERRLSDNPKTLEELSQVYGVSRERVRQIEVRAFDKLQK) form a sigma-70 factor domain-4 region. Positions 259–278 (LEELSQVYGVSRERVRQIEV) form a DNA-binding region, H-T-H motif.

Belongs to the sigma-70 factor family. RpoH subfamily. Interacts with the RNA polymerase core enzyme.

Its subcellular location is the cytoplasm. Sigma factors are initiation factors that promote the attachment of RNA polymerase to specific initiation sites and are then released. This sigma factor is involved in regulation of expression of heat shock genes. The chain is RNA polymerase sigma factor RpoH from Zymomonas mobilis subsp. mobilis (strain ATCC 31821 / ZM4 / CP4).